The primary structure comprises 848 residues: Probable serine/threonine-protein kinase DDB_G0278535 (848 aa).

Low complexity-rich tracts occupy residues 1–52 (MNKS…NNNH), 60–85 (TAATTTTSTTGTGTTAATTSTSTSST), and 95–116 (TSNSNLATATNTPSSSPQVSTS). The tract at residues 1 to 117 (MNKSSSASTV…SSSPQVSTSV (117 aa)) is disordered. ANK repeat units follow at residues 181-212 (MDQTPLCAALRNGSHDIVREILFFYQSNKMDI), 218-248 (SGYTPLHVAASHCDDQILMLLLNYEGINVNI), 252-285 (DKNSALHYFCQKFRSPNCQEPFSIFLKKGVNVNA), 289-320 (NGETPLHKSIFNNTVRLLMVNMLLDAGAEVNV), and 324-353 (RGESPLHFAVRLGREDLVSVLVKAGADITI). The 64-residue stretch at 378–441 (KNVQDIFNWL…IRNCRILRDQ (64 aa)) folds into the SAM domain. A disordered region spans residues 448–478 (NSNVTTGSGSSGSTTTTTTTTTTTSGCGGLN). Over residues 452–472 (TTGSGSSGSTTTTTTTTTTTS) the composition is skewed to low complexity. The 271-residue stretch at 529–799 (LEYTLKLGSG…TLNRLRHEYM (271 aa)) folds into the Protein kinase domain. ATP contacts are provided by residues 535 to 543 (LGSGSSGKV) and lysine 556. Aspartate 650 acts as the Proton acceptor in catalysis. The segment at 810–848 (RKLPSLSPPPQPTTTTTTTTSSSTSTNNINNNINNNNNT) is disordered. Positions 822–848 (TTTTTTTTSSSTSTNNINNNINNNNNT) are enriched in low complexity.

The protein belongs to the protein kinase superfamily. TKL Ser/Thr protein kinase family.

The enzyme catalyses L-seryl-[protein] + ATP = O-phospho-L-seryl-[protein] + ADP + H(+). It catalyses the reaction L-threonyl-[protein] + ATP = O-phospho-L-threonyl-[protein] + ADP + H(+). The protein is Probable serine/threonine-protein kinase DDB_G0278535 of Dictyostelium discoideum (Social amoeba).